Consider the following 149-residue polypeptide: 3-hydroxyacyl-[acyl-carrier-protein] dehydratase FabZ (149 aa).

Residue H50 is part of the active site.

It belongs to the thioester dehydratase family. FabZ subfamily.

It is found in the cytoplasm. The enzyme catalyses a (3R)-hydroxyacyl-[ACP] = a (2E)-enoyl-[ACP] + H2O. In terms of biological role, involved in unsaturated fatty acids biosynthesis. Catalyzes the dehydration of short chain beta-hydroxyacyl-ACPs and long chain saturated and unsaturated beta-hydroxyacyl-ACPs. The polypeptide is 3-hydroxyacyl-[acyl-carrier-protein] dehydratase FabZ (Pediococcus pentosaceus (strain ATCC 25745 / CCUG 21536 / LMG 10740 / 183-1w)).